Reading from the N-terminus, the 327-residue chain is Putative cyclin-dependent kinase F-2 (327 aa).

The region spanning 4–295 (YECLGKIGEG…AADALRCAWF (292 aa)) is the Protein kinase domain. ATP contacts are provided by residues 10-18 (IGEGAAGVV) and Lys33. Residue Asp134 is the Proton acceptor of the active site. At Thr167 the chain carries Phosphothreonine.

Belongs to the protein kinase superfamily. CMGC Ser/Thr protein kinase family. CDC2/CDKX subfamily.

It carries out the reaction L-seryl-[protein] + ATP = O-phospho-L-seryl-[protein] + ADP + H(+). The catalysed reaction is L-threonyl-[protein] + ATP = O-phospho-L-threonyl-[protein] + ADP + H(+). It catalyses the reaction [DNA-directed RNA polymerase] + ATP = phospho-[DNA-directed RNA polymerase] + ADP + H(+). This Oryza sativa subsp. japonica (Rice) protein is Putative cyclin-dependent kinase F-2 (CDKF-2).